A 507-amino-acid polypeptide reads, in one-letter code: Glycosyltransferase family 92 protein C33H5.2 (507 aa).

Residues Val6–Tyr26 traverse the membrane as a helical segment. The GT92 domain maps to Arg155 to Asp444.

The protein belongs to the glycosyltransferase 92 family.

It is found in the membrane. This chain is Glycosyltransferase family 92 protein C33H5.2, found in Caenorhabditis elegans.